The primary structure comprises 265 residues: Glutamate racemase (265 aa).

Residues 12–13 and 44–45 contribute to the substrate site; these read DS and YG. The Proton donor/acceptor role is filled by C75. 76-77 is a binding site for substrate; it reads NT. The active-site Proton donor/acceptor is the C186. 187-188 serves as a coordination point for substrate; the sequence is TH.

The protein belongs to the aspartate/glutamate racemases family.

It catalyses the reaction L-glutamate = D-glutamate. Its pathway is cell wall biogenesis; peptidoglycan biosynthesis. Functionally, provides the (R)-glutamate required for cell wall biosynthesis. The sequence is that of Glutamate racemase from Pseudomonas entomophila (strain L48).